A 108-amino-acid chain; its full sequence is UPF0102 protein Tpet_0671 (108 aa).

This sequence belongs to the UPF0102 family.

This chain is UPF0102 protein Tpet_0671, found in Thermotoga petrophila (strain ATCC BAA-488 / DSM 13995 / JCM 10881 / RKU-1).